Here is a 351-residue protein sequence, read N- to C-terminus: Nicotinate-nucleotide--dimethylbenzimidazole phosphoribosyltransferase (351 aa).

Residue glutamate 317 is the Proton acceptor of the active site.

Belongs to the CobT family.

It catalyses the reaction 5,6-dimethylbenzimidazole + nicotinate beta-D-ribonucleotide = alpha-ribazole 5'-phosphate + nicotinate + H(+). Its pathway is nucleoside biosynthesis; alpha-ribazole biosynthesis; alpha-ribazole from 5,6-dimethylbenzimidazole: step 1/2. Functionally, catalyzes the synthesis of alpha-ribazole-5'-phosphate from nicotinate mononucleotide (NAMN) and 5,6-dimethylbenzimidazole (DMB). The polypeptide is Nicotinate-nucleotide--dimethylbenzimidazole phosphoribosyltransferase (Pseudomonas aeruginosa (strain UCBPP-PA14)).